A 59-amino-acid chain; its full sequence is uncharacterized protein (59 aa).

G33–T40 serves as a coordination point for ATP.

This is an uncharacterized protein from Methanocaldococcus jannaschii (strain ATCC 43067 / DSM 2661 / JAL-1 / JCM 10045 / NBRC 100440) (Methanococcus jannaschii).